A 182-amino-acid chain; its full sequence is Ribulose bisphosphate carboxylase small subunit, chloroplastic 6 (182 aa).

The transit peptide at M1 to R41 directs the protein to the chloroplast.

This sequence belongs to the RuBisCO small chain family. As to quaternary structure, heterohexadecamer of 8 large and 8 small subunits.

It is found in the plastid. The protein localises to the chloroplast. Its function is as follows. RuBisCO catalyzes two reactions: the carboxylation of D-ribulose 1,5-bisphosphate, the primary event in carbon dioxide fixation, as well as the oxidative fragmentation of the pentose substrate. Both reactions occur simultaneously and in competition at the same active site. Although the small subunit is not catalytic it is essential for maximal activity. The sequence is that of Ribulose bisphosphate carboxylase small subunit, chloroplastic 6 from Acetabularia peniculus (Green alga).